An 83-amino-acid polypeptide reads, in one-letter code: Putative protein T-ENOL (83 aa).

Residues 1–33 are disordered; it reads MASTPMGNEGEKKSSWPSQAAPSLRGGPASLSR.

In Homo sapiens (Human), this protein is Putative protein T-ENOL.